The following is a 160-amino-acid chain: Protransforming growth factor alpha (160 aa).

The first 23 residues, 1–23, serve as a signal peptide directing secretion; it reads MVPSAGQLALFALGIVLAACQAL. The propeptide at 24 to 39 is removed in mature form; that stretch reads ENSTSPLSADPPVAAA. Residues 24 to 98 are Extracellular-facing; that stretch reads ENSTSPLSAD…AVVAASQKKQ (75 aa). N-linked (GlcNAc...) asparagine glycosylation is present at Asn-25. The EGF-like domain occupies 43 to 83; it reads HFNDCPDSHTQFCFHGTCRFLVQEDKPACVCHSGYVGARCE. 3 disulfide bridges follow: Cys-47–Cys-60, Cys-55–Cys-71, and Cys-73–Cys-82. The propeptide at 90-160 is removed in mature form; sequence VVAASQKKQA…TACCHSETVV (71 aa). Residues 99–124 traverse the membrane as a helical segment; it reads AITALVVVSIVALAVLIITCVLIHCC. Residues 125–160 are Cytoplasmic-facing; sequence QVRKHCEWCRALICRHEKPSALLKGRTACCHSETVV. S-palmitoyl cysteine attachment occurs at residues Cys-153 and Cys-154.

In terms of assembly, interacts with the PDZ domains of MAGI3, SDCBP and SNTA1. The interaction with SDCBP, is required for the targeting to the cell surface. In the endoplasmic reticulum, in its immature form (i.e. with a prosegment and lacking full N-glycosylation), interacts with CNIH. In the Golgi apparatus, may form a complex with CNIH and GORASP2. Interacts (via cytoplasmic C-terminal domain) with NKD2. As to expression, isoform 1, isoform 3 and isoform 4 are expressed in keratinocytes and tumor-derived cell lines.

It localises to the secreted. It is found in the extracellular space. Its subcellular location is the cell membrane. Functionally, TGF alpha is a mitogenic polypeptide that is able to bind to the EGF receptor/EGFR and to act synergistically with TGF beta to promote anchorage-independent cell proliferation in soft agar. The sequence is that of Protransforming growth factor alpha (TGFA) from Homo sapiens (Human).